A 182-amino-acid polypeptide reads, in one-letter code: Large ribosomal subunit protein uL10 (182 aa).

This sequence belongs to the universal ribosomal protein uL10 family. In terms of assembly, part of the ribosomal stalk of the 50S ribosomal subunit. The N-terminus interacts with L11 and the large rRNA to form the base of the stalk. The C-terminus forms an elongated spine to which L12 dimers bind in a sequential fashion forming a multimeric L10(L12)X complex.

Forms part of the ribosomal stalk, playing a central role in the interaction of the ribosome with GTP-bound translation factors. This is Large ribosomal subunit protein uL10 from Janthinobacterium sp. (strain Marseille) (Minibacterium massiliensis).